Consider the following 314-residue polypeptide: uncharacterized protein (314 aa).

The N-terminal stretch at 1-20 is a signal peptide; sequence MKKRAGIWAALLLAAVMLAG. Residue cysteine 21 is the site of N-palmitoyl cysteine attachment. Cysteine 21 carries the S-diacylglycerol cysteine lipid modification. The 253-residue stretch at 59-311 folds into the Fe/B12 periplasmic-binding domain; sequence KIVSLMPSNT…ELAESIYPDT (253 aa).

The protein belongs to the bacterial solute-binding protein 8 family. The complex is composed of two ATP-binding proteins (YvrA), two transmembrane proteins (YvrB) and a solute-binding protein (YvrC).

Its subcellular location is the cell membrane. Functionally, probably part of an ABC transporter complex. This is an uncharacterized protein from Bacillus subtilis (strain 168).